A 246-amino-acid chain; its full sequence is Large ribosomal subunit protein uL2 (246 aa).

Residues 197 to 226 (SPYAHPHGGGSHPKGGTPVPKTAPPGQKVG) are disordered.

Belongs to the universal ribosomal protein uL2 family. Part of the 50S ribosomal subunit. Forms a bridge to the 30S subunit in the 70S ribosome.

Functionally, one of the primary rRNA binding proteins. Required for association of the 30S and 50S subunits to form the 70S ribosome, for tRNA binding and peptide bond formation. It has been suggested to have peptidyltransferase activity; this is somewhat controversial. Makes several contacts with the 16S rRNA in the 70S ribosome. The sequence is that of Large ribosomal subunit protein uL2 from Pyrobaculum islandicum (strain DSM 4184 / JCM 9189 / GEO3).